The primary structure comprises 124 residues: Small ribosomal subunit protein uS12c (124 aa).

The protein belongs to the universal ribosomal protein uS12 family. In terms of assembly, part of the 30S ribosomal subunit.

The protein localises to the plastid. It is found in the chloroplast. Functionally, with S4 and S5 plays an important role in translational accuracy. Located at the interface of the 30S and 50S subunits. The polypeptide is Small ribosomal subunit protein uS12c (rps12) (Oryza nivara (Indian wild rice)).